A 406-amino-acid chain; its full sequence is Succinylornithine transaminase/acetylornithine aminotransferase (406 aa).

Residues 108–109 and Phe141 each bind pyridoxal 5'-phosphate; that span reads GA. Arg144 contacts N(2)-acetyl-L-ornithine. Pyridoxal 5'-phosphate is bound at residue 226–229; it reads DEVQ. Residue Lys255 is modified to N6-(pyridoxal phosphate)lysine. N(2)-acetyl-L-ornithine is bound at residue Thr283. Residue Thr284 coordinates pyridoxal 5'-phosphate.

The protein belongs to the class-III pyridoxal-phosphate-dependent aminotransferase family. ArgD subfamily. In terms of assembly, homodimer. The cofactor is pyridoxal 5'-phosphate.

The protein localises to the cytoplasm. It catalyses the reaction N(2)-succinyl-L-ornithine + 2-oxoglutarate = N-succinyl-L-glutamate 5-semialdehyde + L-glutamate. It carries out the reaction N(2)-acetyl-L-ornithine + 2-oxoglutarate = N-acetyl-L-glutamate 5-semialdehyde + L-glutamate. The protein operates within amino-acid biosynthesis; L-arginine biosynthesis; N(2)-acetyl-L-ornithine from L-glutamate: step 4/4. Its pathway is amino-acid degradation; L-arginine degradation via AST pathway; L-glutamate and succinate from L-arginine: step 3/5. Functionally, transaminates both N(2)-acetylornithine and N(2)-succinylornithine. The sequence is that of Succinylornithine transaminase/acetylornithine aminotransferase (aruC) from Pseudomonas aeruginosa (strain ATCC 15692 / DSM 22644 / CIP 104116 / JCM 14847 / LMG 12228 / 1C / PRS 101 / PAO1).